The chain runs to 153 residues: Ribosome maturation factor RimP (153 aa).

This sequence belongs to the RimP family.

Its subcellular location is the cytoplasm. Required for maturation of 30S ribosomal subunits. This chain is Ribosome maturation factor RimP, found in Vesicomyosocius okutanii subsp. Calyptogena okutanii (strain HA).